The chain runs to 352 residues: Protein RecA (352 aa).

65 to 72 (GPESSGKT) is an ATP binding site.

The protein belongs to the RecA family.

Its subcellular location is the cytoplasm. In terms of biological role, can catalyze the hydrolysis of ATP in the presence of single-stranded DNA, the ATP-dependent uptake of single-stranded DNA by duplex DNA, and the ATP-dependent hybridization of homologous single-stranded DNAs. It interacts with LexA causing its activation and leading to its autocatalytic cleavage. This is Protein RecA from Pseudomonas fluorescens (strain Pf0-1).